The sequence spans 453 residues: Vacuolar cation/proton exchanger 1b (453 aa).

Residues 1–67 (MPVSRMMMES…LRSLLANLND (67 aa)) lie on the Cytoplasmic side of the membrane. The helical transmembrane segment at 68-85 (VLLTTRLFLLFPAVLLAI) threads the bilayer. Topologically, residues 86 to 91 (AATYLH) are extracellular. The chain crosses the membrane as a helical span at residues 92–109 (FGQVWVFVLSLIGLVPLA). Residues 110–126 (ERLSFLTEQIAFYTGPT) are Cytoplasmic-facing. A helical transmembrane segment spans residues 127 to 147 (VGGLLNATFGNVTEVIIALLA). The interval 136-171 (GNVTEVIIALLALREGKIEVVKCSLLGSILSNLLLV) is cation selection. Topologically, residues 148 to 160 (LREGKIEVVKCSL) are extracellular. Residues 161-181 (LGSILSNLLLVLGTSLFLAGI) traverse the membrane as a helical segment. The Cytoplasmic portion of the chain corresponds to 182-194 (ANLRAHQPYDTKQ). The helical transmembrane segment at 195 to 215 (AHVNTALLMLAVLCHSLPLML) threads the bilayer. Over 216–232 (RYAVTSGDHAIVSGDAA) the chain is Extracellular. The helical transmembrane segment at 233 to 253 (LHLSRACSILMLIAYLAYLFF) threads the bilayer. Residues 254 to 283 (QLNTHRQLFEPQQVEDDDDDDLVIAQDDEP) lie on the Cytoplasmic side of the membrane. Residues 284–304 (VLGFSSAMIWLALMTLLTALL) form a helical membrane-spanning segment. Residues 305–327 (SGYVVSTIEAASESWELSVSFIS) are Extracellular-facing. Residues 328–348 (IILLPIVGNAAEHAGAVIFAL) form a helical membrane-spanning segment. The segment at 335–370 (GNAAEHAGAVIFALKNKMDITLGVSLGSATQISMFV) is cation selection. The Cytoplasmic segment spans residues 349-364 (KNKMDITLGVSLGSAT). The chain crosses the membrane as a helical span at residues 365-385 (QISMFVVPVSVIVAWTMGIPM). Topologically, residues 386–388 (DLD) are extracellular. A helical transmembrane segment spans residues 389–409 (FNLLETGSLFLAILVTAFTLQ). At 410–414 (EGESH) the chain is on the cytoplasmic side. The helical transmembrane segment at 415–435 (YLKGLILVLCYAVISVCFFVI) threads the bilayer. Residues 436-453 (RRRSAGGTDGVHHLDVIV) lie on the Extracellular side of the membrane.

The protein belongs to the Ca(2+):cation antiporter (CaCA) (TC 2.A.19) family. Cation/proton exchanger (CAX) subfamily. In terms of tissue distribution, expressed in embryo and roots.

The protein localises to the vacuole membrane. Its function is as follows. Vacuolar cation/proton exchanger (CAX). Translocates Ca(2+) and other metal ions into vacuoles using the proton gradient formed by H(+)-ATPase and H(+)-pyrophosphatase. This Oryza sativa subsp. japonica (Rice) protein is Vacuolar cation/proton exchanger 1b (CAX1b).